The chain runs to 356 residues: Dual-specificity RNA methyltransferase RlmN (356 aa).

The active-site Proton acceptor is Glu95. The Radical SAM core domain occupies Glu101–Glu332. Cysteines 108 and 338 form a disulfide. Residues Cys115, Cys119, and Cys122 each contribute to the [4Fe-4S] cluster site. S-adenosyl-L-methionine is bound by residues Gly165–Glu166, Ser197, Ser219–His221, and Asn295. Cys338 acts as the S-methylcysteine intermediate in catalysis.

It belongs to the radical SAM superfamily. RlmN family. It depends on [4Fe-4S] cluster as a cofactor.

Its subcellular location is the cytoplasm. It carries out the reaction adenosine(2503) in 23S rRNA + 2 reduced [2Fe-2S]-[ferredoxin] + 2 S-adenosyl-L-methionine = 2-methyladenosine(2503) in 23S rRNA + 5'-deoxyadenosine + L-methionine + 2 oxidized [2Fe-2S]-[ferredoxin] + S-adenosyl-L-homocysteine. The catalysed reaction is adenosine(37) in tRNA + 2 reduced [2Fe-2S]-[ferredoxin] + 2 S-adenosyl-L-methionine = 2-methyladenosine(37) in tRNA + 5'-deoxyadenosine + L-methionine + 2 oxidized [2Fe-2S]-[ferredoxin] + S-adenosyl-L-homocysteine. Functionally, specifically methylates position 2 of adenine 2503 in 23S rRNA and position 2 of adenine 37 in tRNAs. m2A2503 modification seems to play a crucial role in the proofreading step occurring at the peptidyl transferase center and thus would serve to optimize ribosomal fidelity. The protein is Dual-specificity RNA methyltransferase RlmN of Magnetococcus marinus (strain ATCC BAA-1437 / JCM 17883 / MC-1).